A 360-amino-acid chain; its full sequence is Iron uptake protein A1 (360 aa).

The signal sequence occupies residues 1–28 (MVQKLSRRLFLSIGTAFTVVVGSQLLSS). Cys-29 carries N-palmitoyl cysteine lipidation. Residue Cys-29 is the site of S-diacylglycerol cysteine attachment. 5 residues coordinate Fe cation: His-54, Tyr-55, Tyr-185, Tyr-241, and Tyr-242.

Belongs to the bacterial solute-binding protein 1 family.

The protein resides in the cellular thylakoid membrane. The protein localises to the cell membrane. Functionally, plays an important role in protecting the acceptor side of photosystem II (PSII) against oxidative damage, especially under iron-limiting growth conditions. The differing subcellular locations of futA1 (predominantly thylakoid lumen) and futA2 (predominantly periplasmic) suggest they may fulfill different roles. A major iron-binding protein involved in Fe(3+) uptake, probably part of a periplasmic ABC transporter complex futA1A2BC (TC 3.A.1.10.2) involved in Fe(3+) ion import (ferric iron). This protein and futA2 (slr0531) may be subunit proteins that have redundant or overlapping substrate-binding functions. In Synechocystis sp. (strain ATCC 27184 / PCC 6803 / Kazusa), this protein is Iron uptake protein A1 (futA1).